A 308-amino-acid chain; its full sequence is MQEKISKFEDFLTQLQQNITTALEQHETNAAKFISDKWQKPDTHDQKLKGYGNSMIIEGGEIFEKGVVAFSRVHGSELPPSATAKRQELAGKSFIATGLSLVIHPRNPFVPTSHANFRIFIAGADTDNPIWWFGGGFDLTPYYPFEEDAIHWHQTAKNICDKHDKTYYPKFKKWCDEYFYLKHRDECRGVGGLFFDDLNDKSFDECFNFVTDCANSYLDAYIPIVAQRKNIEYSQKHKDFQLYRRGRYVEFNLVFDRGTIFGLQSGGRTESILSSMPPIATWKYNWQPELGSEEEKVYQYIKPRDWIK.

Residue serine 100 participates in substrate binding. A divalent metal cation is bound by residues histidine 104 and histidine 114. The active-site Proton donor is histidine 114. Asparagine 116 to arginine 118 contacts substrate. Residues histidine 153 and histidine 183 each contribute to the a divalent metal cation site. Positions tyrosine 248 to lysine 283 are important for dimerization. Substrate is bound at residue glycine 266 to arginine 268.

This sequence belongs to the aerobic coproporphyrinogen-III oxidase family. Homodimer. A divalent metal cation serves as cofactor.

Its subcellular location is the cytoplasm. The enzyme catalyses coproporphyrinogen III + O2 + 2 H(+) = protoporphyrinogen IX + 2 CO2 + 2 H2O. The protein operates within porphyrin-containing compound metabolism; protoporphyrin-IX biosynthesis; protoporphyrinogen-IX from coproporphyrinogen-III (O2 route): step 1/1. Functionally, involved in the heme biosynthesis. Catalyzes the aerobic oxidative decarboxylation of propionate groups of rings A and B of coproporphyrinogen-III to yield the vinyl groups in protoporphyrinogen-IX. This chain is Oxygen-dependent coproporphyrinogen-III oxidase, found in Francisella tularensis subsp. tularensis (strain FSC 198).